The sequence spans 622 residues: Pheromone-processing carboxypeptidase KEX1 (622 aa).

The N-terminal stretch at 1 to 23 is a signal peptide; the sequence is MAILSTVPALLFALASWAPTVAA. At 24 to 509 the chain is on the lumenal side; it reads QSAADYFVHE…DEAKWKAYYR (486 aa). Asn-111 carries N-linked (GlcNAc...) asparagine glycosylation. Active-site residues include Ser-175 and Asp-375. N-linked (GlcNAc...) asparagine glycans are attached at residues Asn-426 and Asn-434. His-437 is a catalytic residue. The interval 465–492 is disordered; the sequence is TPTDSRLDGEQGPATSVGDIGKNGTSAD. N-linked (GlcNAc...) asparagine glycosylation occurs at Asn-487. The chain crosses the membrane as a helical span at residues 510 to 530; that stretch reads SGEIVLVIVIIAAGAWGWYVW. The Cytoplasmic portion of the chain corresponds to 531-622; sequence RERRKRRGYS…SRSNGGRSGR (92 aa). Residues 539–622 are disordered; the sequence is YSGIMGNTPP…SRSNGGRSGR (84 aa). Residues 559–571 show a composition bias toward basic and acidic residues; the sequence is EGFRDRRTGRDVE.

The protein belongs to the peptidase S10 family.

It localises to the golgi apparatus. It is found in the trans-Golgi network membrane. The catalysed reaction is Preferential release of a C-terminal arginine or lysine residue.. In terms of biological role, protease with a carboxypeptidase B-like function involved in the C-terminal processing of the lysine and arginine residues from protein precursors. Promotes cell fusion and is involved in the programmed cell death. The sequence is that of Pheromone-processing carboxypeptidase KEX1 (KEX1) from Colletotrichum graminicola (strain M1.001 / M2 / FGSC 10212) (Maize anthracnose fungus).